The following is an 811-amino-acid chain: Phosphoinositide 3-kinase adapter protein 1 (811 aa).

Positions 8 to 146 (RGCDILIFYS…AVRKAISEDS (139 aa)) constitute a TIR domain. Residues 10–145 (CDILIFYSPD…AAVRKAISED (136 aa)) are necessary and sufficient to mediate inhibition of NF-kappa-B downstream of activated TLRs; may mediate interaction with MYD88 and TIRAP. Residues 146–169 (SGCDSVTDTEPEDERELPFSKQTN) form a disordered region. Residues 182–318 (VQPDRIRCGA…NIPASGLHLF (137 aa)) form the DBB domain. Tyrosine 264 carries the phosphotyrosine modification. Phosphotyrosine; by SYK occurs at positions 420, 445, and 460. Position 513 is a phosphotyrosine; by ABL1 (tyrosine 513). Residues 525–551 (DLANRPPVPVPRPEASAPGPPPPPDNE) form a disordered region. The span at 530 to 550 (PPVPVPRPEASAPGPPPPPDN) shows a compositional bias: pro residues. Tyrosine 553, tyrosine 570, and tyrosine 594 each carry phosphotyrosine; by ABL1. A Phosphoserine modification is found at serine 642. The residue at position 694 (tyrosine 694) is a Phosphotyrosine; by ABL1. A disordered region spans residues 702 to 811 (VLPARTELRR…PPPPVPPRGR (110 aa)). Basic and acidic residues predominate over residues 707-716 (TELRRGDWKT). Residues 717 to 740 (DSMSSTASSTSNRSSTRSLLSVSS) are compositionally biased toward low complexity. Residue serine 718 is modified to Phosphoserine. Over residues 801–811 (HPPPPVPPRGR) the composition is skewed to pro residues.

Homooligomer. Interacts (phosphorylated on tyrosine residues within YXXM motifs) with PIK3R1 (via SH2 domain); required for BCR- and TLR-mediated activation of phosphoinositide 3-kinase. Interacts (via polyproline C-terminal region) with ABI1 (via SH3 domain); the interaction promotes phosphorylation of PIK3AP1 by ABL1. May interact with MYD88 and TIRAP. Post-translationally, constitutively phosphorylated. Phosphorylated on tyrosine residues in C-terminal region by ABL1. Phosphorylated on tyrosine residues within the YXXM motifs by BTK and SYK. Isoform 1 and isoform 2 are phosphorylated on tyrosine residues, most likely within the YXXM motifs, via CD19 activation. Toll-like receptor activation induces appearance of a phosphorylated form associated with membranes. In terms of tissue distribution, predominantly expressed in spleen (at protein level). Expressed at lower levels in thymus, liver and lung. Expressed in B-cells, macrophages and natural killer (NK) cells.

It is found in the cytoplasm. The protein localises to the cell membrane. Its function is as follows. Signaling adapter that contributes to B-cell development by linking B-cell receptor (BCR) signaling to the phosphoinositide 3-kinase (PI3K)-Akt signaling pathway. Has a complementary role to the BCR coreceptor CD19, coupling BCR and PI3K activation by providing a docking site for the PI3K subunit PIK3R1. Alternatively, links Toll-like receptor (TLR) signaling to PI3K activation, a process preventing excessive inflammatory cytokine production. Also involved in the activation of PI3K in natural killer cells. May be involved in the survival of mature B-cells via activation of REL. The chain is Phosphoinositide 3-kinase adapter protein 1 (Pik3ap1) from Mus musculus (Mouse).